The following is a 432-amino-acid chain: Transcriptional adapter 3-A (432 aa).

Disordered stretches follow at residues 90–127 (HELG…RNMQ) and 275–314 (SPVE…TKSL). Over residues 293-305 (DGASTSPRSQNKP) the composition is skewed to polar residues. Positions 335–398 (ADDSEDEVLA…NEVMDAFRKI (64 aa)) form a coiled coil.

The protein belongs to the NGG1 family.

The protein localises to the nucleus. Functionally, functions as a component of the PCAF complex. The PCAF complex is capable of efficiently acetylating histones in a nucleosomal context. The sequence is that of Transcriptional adapter 3-A (tada3-a) from Xenopus laevis (African clawed frog).